The sequence spans 169 residues: Probable glutathione peroxidase 2 (169 aa).

Cys-41 is an active-site residue.

Belongs to the glutathione peroxidase family. In terms of assembly, interacts with DJ1A. Expressed in leaves, stems, flowers, green siliques and roots.

The protein localises to the cytoplasm. Its subcellular location is the cytosol. It localises to the nucleus. It carries out the reaction 2 glutathione + H2O2 = glutathione disulfide + 2 H2O. Its function is as follows. May constitute a glutathione peroxidase-like protective system against oxidative stresses. The polypeptide is Probable glutathione peroxidase 2 (GPX2) (Arabidopsis thaliana (Mouse-ear cress)).